The primary structure comprises 707 residues: Early transcription factor 82 kDa subunit (707 aa).

Belongs to the poxviridae VETF large subunit family. Heterodimer of a 70 kDa and a 82 kDa subunit. Part of the early transcription complex composed of ETF, RAP94, and the DNA-directed RNA polymerase.

Its subcellular location is the virion. Acts with RNA polymerase to initiate transcription from early gene promoters. Is recruited by the RPO-associated protein of 94 kDa (RAP94) to form the early transcription complex, which also contains the core RNA polymerase. ETF heterodimer binds to early gene promoters. This chain is Early transcription factor 82 kDa subunit (VETFL), found in Molluscum contagiosum virus subtype 1 (MOCV).